Consider the following 400-residue polypeptide: MKQKVIYSAPDEFGHFGTFGGKFIPETLVKNAADLEEEYLKAKNDPEFHQTLDNLLRHYVGRPTPLYHASRLSEKQGGAQIWLKREDLCHTGAHKINNALGQVLLAKRMGKKRIIAETGAGQHGVATATVCALFGLDCIVYMGEEDIRRQAPNVARMKLLGTEVRPVTAGSRTLKDATSEAIRDWMNNPEETFYIVGSVIGMHPYPMMVRDFQSVIGRETRQQVLDQAGRLPDVIVACVGGGSNAIGMFYEFLPDAKEVELIGVEAAGEGLEGKHAASLTKGEIGVLHGSMMKLLQDEYGQVQEAHSISAGLDYPGVGPEHCYLQKLGLVCYTSTTDKEALAALDALAKTEGIICALESAHAVHYAMKRAAEMPKESIIVVNLSGRGDKDMGTIMQELKL.

Lys-95 carries the N6-(pyridoxal phosphate)lysine modification.

The protein belongs to the TrpB family. In terms of assembly, tetramer of two alpha and two beta chains. Pyridoxal 5'-phosphate is required as a cofactor.

It catalyses the reaction (1S,2R)-1-C-(indol-3-yl)glycerol 3-phosphate + L-serine = D-glyceraldehyde 3-phosphate + L-tryptophan + H2O. The protein operates within amino-acid biosynthesis; L-tryptophan biosynthesis; L-tryptophan from chorismate: step 5/5. Its function is as follows. The beta subunit is responsible for the synthesis of L-tryptophan from indole and L-serine. The polypeptide is Tryptophan synthase beta chain (Chlorobaculum tepidum (strain ATCC 49652 / DSM 12025 / NBRC 103806 / TLS) (Chlorobium tepidum)).